Here is a 196-residue protein sequence, read N- to C-terminus: Phosphoheptose isomerase (196 aa).

The region spanning 36–195 (VIQAYKLGKK…EKELFGEKVD (160 aa)) is the SIS domain. Position 51–53 (51–53 (NGG)) interacts with substrate. The Zn(2+) site is built by His-60 and Glu-64. Residues Glu-64, 93–94 (ND), 119–121 (STS), Ser-124, and Gln-171 contribute to the substrate site. Positions 171 and 179 each coordinate Zn(2+).

Belongs to the SIS family. GmhA subfamily. Zn(2+) is required as a cofactor.

The protein resides in the cytoplasm. It catalyses the reaction 2 D-sedoheptulose 7-phosphate = D-glycero-alpha-D-manno-heptose 7-phosphate + D-glycero-beta-D-manno-heptose 7-phosphate. It functions in the pathway carbohydrate biosynthesis; D-glycero-D-manno-heptose 7-phosphate biosynthesis; D-glycero-alpha-D-manno-heptose 7-phosphate and D-glycero-beta-D-manno-heptose 7-phosphate from sedoheptulose 7-phosphate: step 1/1. Functionally, catalyzes the isomerization of sedoheptulose 7-phosphate in D-glycero-D-manno-heptose 7-phosphate. In Clostridium acetobutylicum (strain ATCC 824 / DSM 792 / JCM 1419 / IAM 19013 / LMG 5710 / NBRC 13948 / NRRL B-527 / VKM B-1787 / 2291 / W), this protein is Phosphoheptose isomerase.